Here is a 1023-residue protein sequence, read N- to C-terminus: Sodium/potassium-transporting ATPase subunit alpha-1 (1023 aa).

Positions 1-5 (MGYGA) are excised as a propeptide. The span at 1 to 11 (MGYGAGRDKYE) shows a compositional bias: basic and acidic residues. A disordered region spans residues 1-34 (MGYGAGRDKYEPAATSEHGGKKGKGKGKDRDMEE). Topologically, residues 6–87 (GRDKYEPAAT…NALTPPPTTP (82 aa)) are cytoplasmic. At threonine 15 the chain carries Phosphothreonine; by PKC. A Phosphoserine; by PKC modification is found at serine 16. Residues 82–84 (PPP) form an interaction with phosphoinositide-3 kinase region. The helical transmembrane segment at 88–108 (EWVKFCRQLFGGFSMLLWIGA) threads the bilayer. Residues 109-131 (ILCFLAYGIRKASDLEPDNDNLY) lie on the Extracellular side of the membrane. A helical transmembrane segment spans residues 132-152 (LGVVLSAVVIITGCFSYYQEA). At 153–288 (KSSRIMESFK…GGQTPIAVEI (136 aa)) the chain is on the cytoplasmic side. Residues 215–235 (NSSLTGESEPQTRSPDFTNEN) are disordered. The helical transmembrane segment at 289 to 308 (GHFIHIITGVAVFLGVSFFI) threads the bilayer. The Extracellular segment spans residues 309 to 320 (LSLILHYTWLEA). A helical transmembrane segment spans residues 321–338 (VIFLIGIIVANVPEGLLA). Over 339–772 (TVTVCLTLTA…EEGRLIFDNL (434 aa)) the chain is Cytoplasmic. Aspartate 376 acts as the 4-aspartylphosphate intermediate in catalysis. Lysine 487 serves as a coordination point for ATP. 2 residues coordinate Mg(2+): aspartate 717 and aspartate 721. A helical transmembrane segment spans residues 773–792 (KKSIAYTLTSNIPEITPFLI). The Extracellular segment spans residues 793–802 (FIIADIPLPL). A helical membrane pass occupies residues 803 to 823 (GTVTILCIDLGTDMVPAISLA). Residues 824–843 (YEQAESDIMKRQPRNPKKDK) lie on the Cytoplasmic side of the membrane. Residues 844-866 (LVNERLISMAYGQIGMIQALGGF) traverse the membrane as a helical segment. The Extracellular segment spans residues 867–918 (FAYFVILAENGFLPSTLLGIRVAWEDRYVNDVEDSYGQQWTYEQRKIVEFTC). The chain crosses the membrane as a helical span at residues 919–938 (HTAFFVSIVVVQWADLIICK). Topologically, residues 939-951 (TRRNSVFQQGMKN) are cytoplasmic. The residue at position 943 (serine 943) is a Phosphoserine; by PKA. Residues 952–970 (KILIFGLFEETALAAFLSY) form a helical membrane-spanning segment. Residues 971–985 (CPGMDVALRMYPLKP) are Extracellular-facing. Residues 986-1006 (TWWFCAFPYSLLIFIYDEVRK) traverse the membrane as a helical segment. Topologically, residues 1007–1023 (LILRRSPGGWVEKETYY) are cytoplasmic.

Belongs to the cation transport ATPase (P-type) (TC 3.A.3) family. Type IIC subfamily. As to quaternary structure, the sodium/potassium-transporting ATPase is composed of a catalytic alpha subunit, an auxiliary non-catalytic beta subunit and an additional regulatory subunit. Mainly expressed in kidney. Found in bladder, colon, eye, and testis. Found in low levels in brain, heart, spleen and liver.

It is found in the cell membrane. The protein resides in the sarcolemma. The enzyme catalyses K(+)(out) + Na(+)(in) + ATP + H2O = K(+)(in) + Na(+)(out) + ADP + phosphate + H(+). With respect to regulation, this alpha subunit is resistant to ouabain. Functionally, this is the catalytic component of the active enzyme, which catalyzes the hydrolysis of ATP coupled with the exchange of sodium and potassium ions across the plasma membrane. This action creates the electrochemical gradient of sodium and potassium ions, providing the energy for active transport of various nutrients. This chain is Sodium/potassium-transporting ATPase subunit alpha-1 (ATP1A1), found in Rhinella marina (Cane toad).